Here is a 409-residue protein sequence, read N- to C-terminus: MRNKNIKKVVLAYSGGLDTSAIIPWIKENYSSEVIAFVANVGQNQADLKDIEYKALKSGASQCIIKDLREEFIRDYVYPVLKSGALYEENYLLGTALARPIIAKSQVDLALKLKADGVCHGATGKGNDQVRFETAYVGLAPELKIIAPWREWSFKSRGELLSYLKEKNVKTTASIEKIYSKDENAWHVSTEGGVLEDLWNKPNQDCWTWTNDPKDAPNVPEIISIKIKNGSVIAVNNEFLSPFKCLEKLNLVGIKHGIGRIDVVENRLVGMKSRACYETPGGTILVNALRSLEQLVLDRDSYKWRQQIALEMSYVIYNGNWFSPFRKSLQAAATELATEIDGEVILELYKGTVTAIRKFSPNSLYSKEFATFDQDEVYRQSDADGFIKLYSLPSKIRAINKCMNKALMK.

ATP contacts are provided by residues 12-20 and alanine 39; that span reads AYSGGLDTS. Residue tyrosine 91 participates in L-citrulline binding. Glycine 121 lines the ATP pocket. 3 residues coordinate L-aspartate: threonine 123, asparagine 127, and aspartate 128. An L-citrulline-binding site is contributed by asparagine 127. L-citrulline contacts are provided by arginine 131, serine 180, serine 189, glutamate 265, and tyrosine 277.

The protein belongs to the argininosuccinate synthase family. Type 1 subfamily. Homotetramer.

The protein resides in the cytoplasm. The catalysed reaction is L-citrulline + L-aspartate + ATP = 2-(N(omega)-L-arginino)succinate + AMP + diphosphate + H(+). The protein operates within amino-acid biosynthesis; L-arginine biosynthesis; L-arginine from L-ornithine and carbamoyl phosphate: step 2/3. The polypeptide is Argininosuccinate synthase (Buchnera aphidicola subsp. Baizongia pistaciae (strain Bp)).